The chain runs to 92 residues: Small ribosomal subunit protein uS19 (92 aa).

The protein belongs to the universal ribosomal protein uS19 family.

In terms of biological role, protein S19 forms a complex with S13 that binds strongly to the 16S ribosomal RNA. The protein is Small ribosomal subunit protein uS19 of Methylocella silvestris (strain DSM 15510 / CIP 108128 / LMG 27833 / NCIMB 13906 / BL2).